Here is a 429-residue protein sequence, read N- to C-terminus: Glutamyl-tRNA reductase (429 aa).

Substrate contacts are provided by residues 52-55, serine 110, 115-117, and glutamine 121; these read TCNR and EAQ. Catalysis depends on cysteine 53, which acts as the Nucleophile. Position 190 to 195 (190 to 195) interacts with NADP(+); the sequence is GAGAMI.

This sequence belongs to the glutamyl-tRNA reductase family. In terms of assembly, homodimer.

It carries out the reaction (S)-4-amino-5-oxopentanoate + tRNA(Glu) + NADP(+) = L-glutamyl-tRNA(Glu) + NADPH + H(+). Its pathway is porphyrin-containing compound metabolism; protoporphyrin-IX biosynthesis; 5-aminolevulinate from L-glutamyl-tRNA(Glu): step 1/2. Its function is as follows. Catalyzes the NADPH-dependent reduction of glutamyl-tRNA(Glu) to glutamate 1-semialdehyde (GSA). The polypeptide is Glutamyl-tRNA reductase (Verminephrobacter eiseniae (strain EF01-2)).